A 505-amino-acid polypeptide reads, in one-letter code: UDP-N-acetylmuramate--L-alanine ligase (505 aa).

164-170 (GTHGKTT) contacts ATP.

Belongs to the MurCDEF family.

It localises to the cytoplasm. It carries out the reaction UDP-N-acetyl-alpha-D-muramate + L-alanine + ATP = UDP-N-acetyl-alpha-D-muramoyl-L-alanine + ADP + phosphate + H(+). Its pathway is cell wall biogenesis; peptidoglycan biosynthesis. Cell wall formation. The polypeptide is UDP-N-acetylmuramate--L-alanine ligase (Synechocystis sp. (strain ATCC 27184 / PCC 6803 / Kazusa)).